We begin with the raw amino-acid sequence, 147 residues long: Transcription elongation factor Spt5 (147 aa).

The region spanning 91–122 is the KOW domain; it reads KGDVVEIIAGPFKGERAKVIRVDKHKEEVTLE.

It belongs to the archaeal Spt5 family. As to quaternary structure, heterodimer composed of Spt4 and Spt5. Interacts with RNA polymerase (RNAP). Forms a homodimer in solution.

Functionally, stimulates transcription elongation. This Methanocaldococcus jannaschii (strain ATCC 43067 / DSM 2661 / JAL-1 / JCM 10045 / NBRC 100440) (Methanococcus jannaschii) protein is Transcription elongation factor Spt5.